We begin with the raw amino-acid sequence, 68 residues long: uncharacterized protein (68 aa).

Positions 2–67 constitute an HMA domain; that stretch reads KTITLNIKGI…VIEDAGFDAT (66 aa). A metal cation-binding residues include Cys-13 and Cys-16.

This is an uncharacterized protein from Haemophilus influenzae (strain ATCC 51907 / DSM 11121 / KW20 / Rd).